A 296-amino-acid chain; its full sequence is Uricase (296 aa).

Residues Lys14 and Thr61 each act as charge relay system in the active site. Urate contacts are provided by Thr61, Asp62, Phe163, Arg180, Val229, Gln230, and Asn256. The Charge relay system role is filled by His258.

This sequence belongs to the uricase family.

Its subcellular location is the peroxisome. The protein resides in the cytoplasm. The protein localises to the nucleus. The enzyme catalyses urate + O2 + H2O = 5-hydroxyisourate + H2O2. The protein operates within purine metabolism; urate degradation; (S)-allantoin from urate: step 1/3. Catalyzes the oxidation of uric acid to 5-hydroxyisourate, which is further processed to form (S)-allantoin. The chain is Uricase from Schizosaccharomyces pombe (strain 972 / ATCC 24843) (Fission yeast).